The primary structure comprises 178 residues: MKIKAEIMDEKAIDRALIRIAHEIVERNKGIEDVVLVGIKTRGVPLAERIAKYISRIEGKKPPVGSLDITLYRDDLTTDLEQPLVKKKDIGVDVVGKIVVLVDDVIYTGRTIRAAMDAIIDLGRPKAIQLAELIDRGHRELPIKPDYVGKNVPTSKNEIVNVMLEEVDKVNRVVITEK.

The PRPP-binding motif lies at 99-111 (VVLVDDVIYTGRT).

This sequence belongs to the purine/pyrimidine phosphoribosyltransferase family. PyrR subfamily. Homodimer and homohexamer; in equilibrium.

The enzyme catalyses UMP + diphosphate = 5-phospho-alpha-D-ribose 1-diphosphate + uracil. Functionally, regulates transcriptional attenuation of the pyrimidine nucleotide (pyr) operon by binding in a uridine-dependent manner to specific sites on pyr mRNA. This disrupts an antiterminator hairpin in the RNA and favors formation of a downstream transcription terminator, leading to a reduced expression of downstream genes. Its function is as follows. Also displays a weak uracil phosphoribosyltransferase activity which is not physiologically significant. In Thermoanaerobacter pseudethanolicus (strain ATCC 33223 / 39E) (Clostridium thermohydrosulfuricum), this protein is Bifunctional protein PyrR.